The chain runs to 200 residues: MTIEFNATKREGQGSSASRRLRRAAQVPGIIYGAGKDAQPITLDHNELYHLLKKEAFHASVLSINVEGAKETVVLRDTQWHAYKQQVLHIDFQRVDASQKLHLKVPLHFVNGDNAPAVKLGGNIIAHVMTELDVQCLPSSLPEFIEVDLAALEAGQSIHVSQLKLPAGVEAVHHGEGDPVVASAQTTRGAAAAEGEGEAA.

Disordered regions lie at residues 1–20 (MTIEFNATKREGQGSSASRR) and 179–200 (PVVASAQTTRGAAAAEGEGEAA).

This sequence belongs to the bacterial ribosomal protein bL25 family. CTC subfamily. Part of the 50S ribosomal subunit; part of the 5S rRNA/L5/L18/L25 subcomplex. Contacts the 5S rRNA. Binds to the 5S rRNA independently of L5 and L18.

In terms of biological role, this is one of the proteins that binds to the 5S RNA in the ribosome where it forms part of the central protuberance. This is Large ribosomal subunit protein bL25 from Azoarcus sp. (strain BH72).